Here is a 160-residue protein sequence, read N- to C-terminus: Phosphopantetheine adenylyltransferase (160 aa).

Residue threonine 10 participates in substrate binding. Residues 10 to 11 (TF) and histidine 18 each bind ATP. Substrate-binding residues include lysine 42, methionine 74, and arginine 88. ATP contacts are provided by residues 89–91 (GLR), glutamate 99, and 124–130 (LSFLSSS).

This sequence belongs to the bacterial CoaD family. As to quaternary structure, homohexamer. Mg(2+) serves as cofactor.

The protein localises to the cytoplasm. It catalyses the reaction (R)-4'-phosphopantetheine + ATP + H(+) = 3'-dephospho-CoA + diphosphate. The protein operates within cofactor biosynthesis; coenzyme A biosynthesis; CoA from (R)-pantothenate: step 4/5. In terms of biological role, reversibly transfers an adenylyl group from ATP to 4'-phosphopantetheine, yielding dephospho-CoA (dPCoA) and pyrophosphate. The polypeptide is Phosphopantetheine adenylyltransferase (Photorhabdus laumondii subsp. laumondii (strain DSM 15139 / CIP 105565 / TT01) (Photorhabdus luminescens subsp. laumondii)).